A 346-amino-acid polypeptide reads, in one-letter code: uncharacterized protein (346 aa).

An N-terminal signal peptide occupies residues 1–28; that stretch reads MFEWMKNKKAISPILALLIVLGVTIVVG.

This is an uncharacterized protein from Methanocaldococcus jannaschii (strain ATCC 43067 / DSM 2661 / JAL-1 / JCM 10045 / NBRC 100440) (Methanococcus jannaschii).